A 372-amino-acid polypeptide reads, in one-letter code: 18-hydroxynorfluorocurarine reductase (372 aa).

Positions 47, 50, 69, 70, 100, 103, 106, 114, and 172 each coordinate Zn(2+). Residues 197 to 202 (GLGGIG), K226, 283 to 285 (LGA), S307, and R354 each bind NADP(+).

The protein belongs to the zinc-containing alcohol dehydrogenase family. As to quaternary structure, homodimer. Zn(2+) is required as a cofactor. In terms of tissue distribution, mainly expressed in roots.

The enzyme catalyses (19E)-cur-19-en-17-al + NADP(+) = norfluorocurarine + NADPH + H(+). It carries out the reaction 17,18-epoxy-17-hydroxycur-19-ene + NADP(+) = 18-hydroxynorfluorocurarine + NADPH + H(+). It participates in alkaloid biosynthesis. Its function is as follows. Alcohol dehydrogenase involved in the biosynthesis of curare monoterpene indole alkaloids (MIAs), natural products such as strychnine, a neurotoxic compound used as a pesticide to control rodents, and its pharmacologically active derivatives, including brucine, used to regulate blood pressure. Curare alkaloids act as animal glycine receptor antagonists. Catalyzes the conversion of norfluorocurarine to desoxy Wieland-Gumlich aldehyde, and of 18-OH norfluorocurarine to Wieland-Gumlich aldehyde. The sequence is that of 18-hydroxynorfluorocurarine reductase from Strychnos nux-vomica (Poison nut).